A 280-amino-acid polypeptide reads, in one-letter code: Acetyl-coenzyme A carboxylase carboxyl transferase subunit beta (280 aa).

In terms of domain architecture, CoA carboxyltransferase N-terminal spans 28-280 (LFLACPYCGA…IVRLHTAEAE (253 aa)). 4 residues coordinate Zn(2+): C32, C35, C50, and C53. The C4-type zinc-finger motif lies at 32 to 53 (CPYCGAQMYNKQLGKYRVCAKC).

The protein belongs to the AccD/PCCB family. In terms of assembly, acetyl-CoA carboxylase is a heterohexamer composed of biotin carboxyl carrier protein (AccB), biotin carboxylase (AccC) and two subunits each of ACCase subunit alpha (AccA) and ACCase subunit beta (AccD). It depends on Zn(2+) as a cofactor.

The protein localises to the cytoplasm. It carries out the reaction N(6)-carboxybiotinyl-L-lysyl-[protein] + acetyl-CoA = N(6)-biotinyl-L-lysyl-[protein] + malonyl-CoA. It participates in lipid metabolism; malonyl-CoA biosynthesis; malonyl-CoA from acetyl-CoA: step 1/1. In terms of biological role, component of the acetyl coenzyme A carboxylase (ACC) complex. Biotin carboxylase (BC) catalyzes the carboxylation of biotin on its carrier protein (BCCP) and then the CO(2) group is transferred by the transcarboxylase to acetyl-CoA to form malonyl-CoA. The polypeptide is Acetyl-coenzyme A carboxylase carboxyl transferase subunit beta (Leuconostoc mesenteroides subsp. mesenteroides (strain ATCC 8293 / DSM 20343 / BCRC 11652 / CCM 1803 / JCM 6124 / NCDO 523 / NBRC 100496 / NCIMB 8023 / NCTC 12954 / NRRL B-1118 / 37Y)).